Here is a 123-residue protein sequence, read N- to C-terminus: Small ribosomal subunit protein uS12 (123 aa).

The protein belongs to the universal ribosomal protein uS12 family. In terms of assembly, part of the 30S ribosomal subunit. Contacts proteins S8 and S17. May interact with IF1 in the 30S initiation complex.

Functionally, with S4 and S5 plays an important role in translational accuracy. In terms of biological role, interacts with and stabilizes bases of the 16S rRNA that are involved in tRNA selection in the A site and with the mRNA backbone. Located at the interface of the 30S and 50S subunits, it traverses the body of the 30S subunit contacting proteins on the other side and probably holding the rRNA structure together. The combined cluster of proteins S8, S12 and S17 appears to hold together the shoulder and platform of the 30S subunit. The sequence is that of Small ribosomal subunit protein uS12 from Corynebacterium diphtheriae (strain ATCC 700971 / NCTC 13129 / Biotype gravis).